The chain runs to 131 residues: Protein NEGATIVE REGULATOR OF RESISTANCE (131 aa).

Disordered stretches follow at residues 1–33 (MDAT…DEVS) and 51–131 (TRRL…RAPA). Residues 12 to 15 (KRKR) carry the Nuclear localization signal motif. Over residues 116–131 (PPSDAPATPRSARAPA) the composition is skewed to low complexity.

This sequence belongs to the NPR1-interactor family. Interacts with NPR1/NH1. Interacts with NPR2/NH2.

It is found in the nucleus. Acts as a negative regulator of disease resistance. Acts on basal resistance, age-related resistance and resistance mediated by the LRR receptor kinase XA21. Plants over-expressing NRR display enhanced susceptibility to the bacterial blight Xanthomonas oryzae pv. oryzae (Xoo). In Oryza sativa subsp. indica (Rice), this protein is Protein NEGATIVE REGULATOR OF RESISTANCE.